Here is a 408-residue protein sequence, read N- to C-terminus: LL-diaminopimelate aminotransferase (408 aa).

The substrate site is built by Tyr15 and Gly42. Pyridoxal 5'-phosphate contacts are provided by residues Tyr72, 108–109, Tyr132, Asn186, Tyr217, and 245–247; these read AK and SFS. Substrate-binding residues include Lys109, Tyr132, and Asn186. Lys248 carries the N6-(pyridoxal phosphate)lysine modification. Pyridoxal 5'-phosphate-binding residues include Arg256 and Asn291. Substrate contacts are provided by Asn291 and Arg386.

This sequence belongs to the class-I pyridoxal-phosphate-dependent aminotransferase family. LL-diaminopimelate aminotransferase subfamily. In terms of assembly, homodimer. Requires pyridoxal 5'-phosphate as cofactor.

The enzyme catalyses (2S,6S)-2,6-diaminopimelate + 2-oxoglutarate = (S)-2,3,4,5-tetrahydrodipicolinate + L-glutamate + H2O + H(+). The protein operates within amino-acid biosynthesis; L-lysine biosynthesis via DAP pathway; LL-2,6-diaminopimelate from (S)-tetrahydrodipicolinate (aminotransferase route): step 1/1. Functionally, involved in the synthesis of meso-diaminopimelate (m-DAP or DL-DAP), required for both lysine and peptidoglycan biosynthesis. Catalyzes the direct conversion of tetrahydrodipicolinate to LL-diaminopimelate. The protein is LL-diaminopimelate aminotransferase of Desulfotalea psychrophila (strain LSv54 / DSM 12343).